A 444-amino-acid chain; its full sequence is Enolase 1 (444 aa).

Substrate contacts are provided by His165 and Glu174. Glu217 (proton donor) is an active-site residue. The substrate site is built by Glu303 and Asp330. Catalysis depends on Lys355, which acts as the Proton acceptor. Residues 382–385 and Lys406 each bind substrate; that span reads SHRS.

This sequence belongs to the enolase family. Homodimer. Mg(2+) serves as cofactor.

Its subcellular location is the cytoplasm. The enzyme catalyses (2R)-2-phosphoglycerate = phosphoenolpyruvate + H2O. Its pathway is carbohydrate degradation; glycolysis; pyruvate from D-glyceraldehyde 3-phosphate: step 4/5. The chain is Enolase 1 (ENO1) from Toxoplasma gondii.